The primary structure comprises 548 residues: Folylpolyglutamate synthase (548 aa).

Position 130–133 (130–133 (GKGS)) interacts with ATP. Mg(2+)-binding residues include S157, E234, and H262. The ATP site is built by R382 and D396.

This sequence belongs to the folylpolyglutamate synthase family. A monovalent cation serves as cofactor.

It localises to the mitochondrion inner membrane. Its subcellular location is the mitochondrion matrix. The protein localises to the cytoplasm. The enzyme catalyses (6S)-5,6,7,8-tetrahydrofolyl-(gamma-L-Glu)(n) + L-glutamate + ATP = (6S)-5,6,7,8-tetrahydrofolyl-(gamma-L-Glu)(n+1) + ADP + phosphate + H(+). Its pathway is cofactor biosynthesis; tetrahydrofolylpolyglutamate biosynthesis. Functionally, catalyzes conversion of folates to polyglutamate derivatives allowing concentration of folate compounds in the cell and the intracellular retention of these cofactors, which are important substrates for most of the folate-dependent enzymes that are involved in one-carbon transfer reactions involved in purine, pyrimidine and amino acid synthesis. Required for methionine synthesis and maintenance of intact mitochondrial DNA. Involved in telomere maintenance. This Saccharomyces cerevisiae (strain FostersO) (Baker's yeast) protein is Folylpolyglutamate synthase.